Consider the following 200-residue polypeptide: NAD(P)H-dependent FMN reductase C4B3.06c (200 aa).

Residues arginine 22, 96–99, and tyrosine 126 each bind FMN; that span reads QYNG.

As to quaternary structure, homodimer.

Its subcellular location is the cytoplasm. It is found in the nucleus. The catalysed reaction is FMNH2 + NADP(+) = FMN + NADPH + 2 H(+). It catalyses the reaction FMNH2 + NAD(+) = FMN + NADH + 2 H(+). In terms of biological role, has several reductase activities that are NAD(P)H-dependent and involve FMN as a cofactor. May be involved in ferric iron assimilation. This chain is NAD(P)H-dependent FMN reductase C4B3.06c, found in Schizosaccharomyces pombe (strain 972 / ATCC 24843) (Fission yeast).